The following is a 72-amino-acid chain: Large ribosomal subunit protein uL29 (72 aa).

The protein belongs to the universal ribosomal protein uL29 family.

This is Large ribosomal subunit protein uL29 (rpmC) from Chlamydia pneumoniae (Chlamydophila pneumoniae).